The primary structure comprises 212 residues: External core antigen (212 aa).

A signal peptide spans 1–19 (MQLFHLCLIISCSCPTVQA). The segment at 25–27 (GWL) is HBEAG. The segment at 165–212 (NAPILSTLPETTVVRRRGRSPRRRTPSPRRRRSQSPRRRRSQSRESQC) is disordered. The span at 178 to 205 (VRRRGRSPRRRTPSPRRRRSQSPRRRRS) shows a compositional bias: basic residues. The 1; half-length repeat unit spans residues 184–190 (SPRRRTP). The segment at 184–206 (SPRRRTPSPRRRRSQSPRRRRSQ) is 3 X 8 AA repeats of S-P-R-R-R-R-S-Q. The propeptide occupies 184–212 (SPRRRTPSPRRRRSQSPRRRRSQSRESQC). A run of 2 repeats spans residues 191–198 (SPRRRRSQ) and 199–206 (SPRRRRSQ).

It belongs to the orthohepadnavirus precore antigen family. As to quaternary structure, homodimerizes. In terms of processing, phosphorylated. Cleaved by host furin.

It is found in the secreted. The protein resides in the host nucleus. In terms of biological role, may regulate immune response to the intracellular capsid in acting as a T-cell tolerogen, by having an immunoregulatory effect which prevents destruction of infected cells by cytotoxic T-cells. This immune regulation may predispose to chronicity during perinatal infections and prevent severe liver injury during adult infections. The polypeptide is External core antigen (Homo sapiens (Human)).